The chain runs to 847 residues: MSRYDPAATESRWQAAWDAAGVFTARHDPARPKYYVLEMFPYPSGRIHMGHVRNYTMGDVVARQKAAAGFSVLHPMGWDAFGMPAENAAMERGGHPKDWTYGNIADMRAQMKPLGLSIDWSREFATCDPEYYGQQQAMFIDMMEAGLVYRKNAVVNWDPVDMTVLANEQVIDGKGWRSGAPVVRRELTQWFFRISDYAGELLEALDTLKDWPEKVRLMQANWIGQSRGLQFAFSMAGAPEGFDRLEVYTTRPDTLMGASFAAISPDHPLARHLERHDPEVAEFVAECRRVGTSEEALEKAEKKGFDTGLRVRHPFDAAWELPVYIANFILMDYGTGAIFGCPAHDQRDFEFATKYGLPIRPVFLPEGCEETALAEAFVPMKSERVHYIRGFAGAEVQTGEEGVAAAIAFCESQGVGRGVTNYRLRDWGISRQRYWGCPIPVIHCETCGVVPEAKENLPVRLPDDVSFDVPGNPLDRHPTWRDCTCPKCGAKARRETDTMDTFVDSSWYYARFTAPRAATPTDAEEADYWMNVDQYIGGIEHAILHLLYSRFFARAMQKTGHLPAKAIEPFNALFTQGMVTHEIYLTRDAAGRPVYHLPEDVTDGKLADGTPVEIIPSAKMSKSKKNVVDPMNIIRQFGADTARWFVMSDSPPERDVEWTASGAEAASKHLHRVWRLADEISRADGEANAEDGALDKATARAIAEVTQGVEGFAFNKAIAKLYEFTNTLSRSGAGAEAKKRAMRTMAQLMSPMVPHLAEEVWAMLGGEGLVAQAAWPKADPALLIDDTVTLPIQVNGKRRGEITVPKEMAASEVEKLVLADEAVQRALGGAAPKKLIVVPGRIVNVVI.

The 'HIGH' region motif lies at 41-51; that stretch reads PYPSGRIHMGH. The 'KMSKS' region motif lies at 619 to 623; sequence KMSKS. Lys-622 provides a ligand contact to ATP.

Belongs to the class-I aminoacyl-tRNA synthetase family.

It is found in the cytoplasm. It catalyses the reaction tRNA(Leu) + L-leucine + ATP = L-leucyl-tRNA(Leu) + AMP + diphosphate. This is Leucine--tRNA ligase from Cereibacter sphaeroides (strain ATCC 17023 / DSM 158 / JCM 6121 / CCUG 31486 / LMG 2827 / NBRC 12203 / NCIMB 8253 / ATH 2.4.1.) (Rhodobacter sphaeroides).